Consider the following 265-residue polypeptide: Type 1 encapsulin shell protein (265 aa).

The protein belongs to the encapsulin family. Family 1 subfamily. In terms of assembly, multimeric. The encapsulin nanocompartment is formed by 60 subunits. Monomers form pentamers which assemble to form shells. There are 12 pores where the pentamers meet as well as 3-fold axis channels and dimer channels; none are larger than 3-4 Angstroms in diameter. The N-terminus of the protein is inside the shell, the C-terminus is outside. In terms of processing, the initiator methionine is partially removed. When isolated from culture filtrate isoelectric focusing gives 3 bands, none of which are glycosylated.

The protein resides in the encapsulin nanocompartment. It localises to the secreted. It is found in the cell membrane. Functionally, shell component of a type 1 encapsulin nanocompartment in situ; its cargo protects against oxidative stress at low pH. In situ and in E.coli assembles into proteinaceous shells about 22 nm in diameter with 2.5 nm thick walls. Cargo proteins are targeted to the interior via their C-terminal extensions; empty intact shells can be isolated in E.coli in the absence of cargo protein. There are at least 4 possible cargo proteins, DyP (encoded in the same locus), FolB, BfrB and Rv1762c; DyP and Rv1762c have been identified in vivo. Probably involved in protection against oxidative damage from the host immune response. A T-cell antigen found in bacterial culture cell filtrates, stimulates mouse immune response. Does not have detectable bacteriocin activity. This chain is Type 1 encapsulin shell protein, found in Mycobacterium tuberculosis (strain ATCC 25618 / H37Rv).